A 519-amino-acid polypeptide reads, in one-letter code: Membrane-bound lytic murein transglycosylase F (519 aa).

The first 32 residues, 1–32 (MKKLKLNYLLIGVVTLLLAVALWPAIPWSGKA), serve as a signal peptide directing secretion. The segment at 33-269 (DNRIAAIQAR…RLEEKYLGHG (237 aa)) is non-LT domain. An LT domain region spans residues 270–519 (NDFDYVDTRS…PNTLSPVSPR (250 aa)). Glu-314 is an active-site residue. The segment at 495 to 519 (PFSQAGAGGKTHSALPNTLSPVSPR) is disordered. A compositionally biased stretch (polar residues) spans 508–519 (ALPNTLSPVSPR).

This sequence in the N-terminal section; belongs to the bacterial solute-binding protein 3 family. It in the C-terminal section; belongs to the transglycosylase Slt family.

The protein localises to the cell outer membrane. The enzyme catalyses Exolytic cleavage of the (1-&gt;4)-beta-glycosidic linkage between N-acetylmuramic acid (MurNAc) and N-acetylglucosamine (GlcNAc) residues in peptidoglycan, from either the reducing or the non-reducing ends of the peptidoglycan chains, with concomitant formation of a 1,6-anhydrobond in the MurNAc residue.. Functionally, murein-degrading enzyme that degrades murein glycan strands and insoluble, high-molecular weight murein sacculi, with the concomitant formation of a 1,6-anhydromuramoyl product. Lytic transglycosylases (LTs) play an integral role in the metabolism of the peptidoglycan (PG) sacculus. Their lytic action creates space within the PG sacculus to allow for its expansion as well as for the insertion of various structures such as secretion systems and flagella. This is Membrane-bound lytic murein transglycosylase F from Cronobacter sakazakii (strain ATCC BAA-894) (Enterobacter sakazakii).